The sequence spans 331 residues: Type 2 lactosamine alpha-2,3-sialyltransferase (331 aa).

Residues 1–4 (MRGY) lie on the Cytoplasmic side of the membrane. A helical; Signal-anchor for type II membrane protein membrane pass occupies residues 5-25 (LVAIFLSAVFLYYVLHCILWG). The Lumenal segment spans residues 26 to 331 (TNVYWVAPVE…KNLVINLTQD (306 aa)). 6 N-linked (GlcNAc...) asparagine glycosylation sites follow: N129, N181, N282, N295, N308, and N327.

Belongs to the glycosyltransferase 29 family. In terms of tissue distribution, ubiquitous.

It is found in the golgi apparatus membrane. It catalyses the reaction a neolactoside nLc4Cer(d18:1(4E)) + CMP-N-acetyl-beta-neuraminate = a neolactoside IV(3)-alpha-NeuAc-nLc4Cer(d18:1(4E)) + CMP + H(+). It carries out the reaction a beta-D-galactosyl-(1-&gt;4)-N-acetyl-beta-D-glucosaminyl derivative + CMP-N-acetyl-beta-neuraminate = an N-acetyl-alpha-neuraminyl-(2-&gt;3)-beta-D-galactosyl-(1-&gt;4)-N-acetyl-beta-D-glucosaminyl derivative + CMP + H(+). The catalysed reaction is a neolactoside nLc6Cer(d18:1(4E)) + CMP-N-acetyl-beta-neuraminate = a neolactoside VI(3)-alpha-NeuNAc-nLc6Cer(d18:1(4E)) + CMP + H(+). In terms of biological role, transfers the sialyl residue from CMP-N-acetyl-beta-neuraminate to the terminal galactose residue on sugar chains of glycoproteins and glycolipids. It's alpha-2,3-sialyltransferase activity is specific toward type II glycan chains (Galbeta1-4GlcNAc) on glycoproteins and glycolipids such as neolactosides nLc4Cer and nLc6Cer, whose sialyl-products serve as precursors for the Lewis X antigen. Critically involved in the synthesis of functional selectin ligands needed for neutrophil recruitment during inflammation and lymphocyte homing to the lymph nodes. This is Type 2 lactosamine alpha-2,3-sialyltransferase (ST3GAL6) from Homo sapiens (Human).